A 170-amino-acid chain; its full sequence is Lipoprotein signal peptidase (170 aa).

The next 3 membrane-spanning stretches (helical) occupy residues 12 to 32 (WYWV…WVLA), 67 to 87 (WQRW…TVWL), and 93 to 113 (SLWK…GNLI). Residues Asp123 and Asp141 contribute to the active site. Residues 137-157 (FNIADSAIFIGAVLIIWDSFF) form a helical membrane-spanning segment.

It belongs to the peptidase A8 family.

The protein localises to the cell inner membrane. It carries out the reaction Release of signal peptides from bacterial membrane prolipoproteins. Hydrolyzes -Xaa-Yaa-Zaa-|-(S,diacylglyceryl)Cys-, in which Xaa is hydrophobic (preferably Leu), and Yaa (Ala or Ser) and Zaa (Gly or Ala) have small, neutral side chains.. It participates in protein modification; lipoprotein biosynthesis (signal peptide cleavage). Its function is as follows. This protein specifically catalyzes the removal of signal peptides from prolipoproteins. This chain is Lipoprotein signal peptidase, found in Shewanella sp. (strain MR-4).